The sequence spans 917 residues: Major intrinsically disordered Notch2-binding receptor 1 (917 aa).

Topologically, residues 1-892 (MEANQEASLF…AEFRRAKVCK (892 aa)) are cytoplasmic. Disordered stretches follow at residues 337–367 (STYF…WPAK), 389–410 (SEEK…GPDR), 457–476 (DKSI…SVGT), 568–588 (ITNG…NVHH), 652–679 (SEAP…LENS), 706–727 (TRPS…IASI), and 746–783 (NEEE…LPKQ). The span at 460 to 476 (ISCTSGQHSSDTSSVGT) shows a compositional bias: polar residues. The span at 576–588 (KGDKCNRPENVHH) shows a compositional bias: basic and acidic residues. Serine 712 bears the Phosphoserine mark. Residues 893 to 913 (IAALITAAACTVILVIVVPIC) traverse the membrane as a helical segment. Over 914–917 (TMKS) the chain is Extracellular.

It belongs to the MINAR family. In terms of assembly, interacts with NOTCH2; this interaction increases MINAR1 stability. Interacts (via N-terminus) with DEPTOR (via PDZ domain); this interaction may stabilize DEPTOR protein by impairing its ubiquitination.

It localises to the cell membrane. Its function is as follows. Intrinsically disordered protein which may negatively regulate mTOR signaling pathway by stabilizing the mTOR complex component DEPTOR. Negatively regulates angiogenesis. Negatively regulates cell growth. Negatively regulates neurite outgrowth in hippocampal neurons. The chain is Major intrinsically disordered Notch2-binding receptor 1 (Minar1) from Rattus norvegicus (Rat).